The sequence spans 940 residues: Translation initiation factor IF-2 (940 aa).

Disordered stretches follow at residues 48 to 264 (ESFG…VESK) and 278 to 351 (QVAE…TERK). Basic and acidic residues-rich tracts occupy residues 65–95 (SKPE…KEEV), 112–125 (FKAE…EQAA), 155–206 (NNER…REAA), 232–258 (RTSE…KFEE), and 292–301 (ARPDKKRDFN). The segment covering 314–332 (NRNSQNQVRNQRTSNWNNN) has biased composition (low complexity). The tr-type G domain occupies 442–609 (ERPPVVTIMG…TVLLVAEIQE (168 aa)). Residues 451-458 (GHVDHGKT) are G1. 451 to 458 (GHVDHGKT) contacts GTP. Residues 476-480 (GITQH) are G2. The interval 497–500 (DTPG) is G3. GTP contacts are provided by residues 497-501 (DTPGH) and 551-554 (NKID). Residues 551–554 (NKID) form a G4 region. The segment at 587–589 (SAK) is G5.

Belongs to the TRAFAC class translation factor GTPase superfamily. Classic translation factor GTPase family. IF-2 subfamily.

Its subcellular location is the cytoplasm. In terms of biological role, one of the essential components for the initiation of protein synthesis. Protects formylmethionyl-tRNA from spontaneous hydrolysis and promotes its binding to the 30S ribosomal subunits. Also involved in the hydrolysis of GTP during the formation of the 70S ribosomal complex. In Streptococcus suis (strain 98HAH33), this protein is Translation initiation factor IF-2.